Consider the following 216-residue polypeptide: Imidazole glycerol phosphate synthase subunit HisH (216 aa).

In terms of domain architecture, Glutamine amidotransferase type-1 spans 2–216; sequence RVAIIDYGSG…LITNFLRWRP (215 aa). Cysteine 88 acts as the Nucleophile in catalysis. Active-site residues include histidine 196 and glutamate 198.

Heterodimer of HisH and HisF.

Its subcellular location is the cytoplasm. It carries out the reaction 5-[(5-phospho-1-deoxy-D-ribulos-1-ylimino)methylamino]-1-(5-phospho-beta-D-ribosyl)imidazole-4-carboxamide + L-glutamine = D-erythro-1-(imidazol-4-yl)glycerol 3-phosphate + 5-amino-1-(5-phospho-beta-D-ribosyl)imidazole-4-carboxamide + L-glutamate + H(+). It catalyses the reaction L-glutamine + H2O = L-glutamate + NH4(+). It functions in the pathway amino-acid biosynthesis; L-histidine biosynthesis; L-histidine from 5-phospho-alpha-D-ribose 1-diphosphate: step 5/9. In terms of biological role, IGPS catalyzes the conversion of PRFAR and glutamine to IGP, AICAR and glutamate. The HisH subunit catalyzes the hydrolysis of glutamine to glutamate and ammonia as part of the synthesis of IGP and AICAR. The resulting ammonia molecule is channeled to the active site of HisF. This is Imidazole glycerol phosphate synthase subunit HisH from Mesorhizobium japonicum (strain LMG 29417 / CECT 9101 / MAFF 303099) (Mesorhizobium loti (strain MAFF 303099)).